A 250-amino-acid polypeptide reads, in one-letter code: tRNA pseudouridine synthase A (250 aa).

The active-site Nucleophile is Asp52. A substrate-binding site is contributed by Tyr110.

It belongs to the tRNA pseudouridine synthase TruA family. As to quaternary structure, homodimer.

It catalyses the reaction uridine(38/39/40) in tRNA = pseudouridine(38/39/40) in tRNA. Its function is as follows. Formation of pseudouridine at positions 38, 39 and 40 in the anticodon stem and loop of transfer RNAs. This is tRNA pseudouridine synthase A from Citrifermentans bemidjiense (strain ATCC BAA-1014 / DSM 16622 / JCM 12645 / Bem) (Geobacter bemidjiensis).